Consider the following 216-residue polypeptide: Protein-L-isoaspartate O-methyltransferase (216 aa).

S62 is a catalytic residue.

This sequence belongs to the methyltransferase superfamily. L-isoaspartyl/D-aspartyl protein methyltransferase family.

Its subcellular location is the cytoplasm. It catalyses the reaction [protein]-L-isoaspartate + S-adenosyl-L-methionine = [protein]-L-isoaspartate alpha-methyl ester + S-adenosyl-L-homocysteine. Catalyzes the methyl esterification of L-isoaspartyl residues in peptides and proteins that result from spontaneous decomposition of normal L-aspartyl and L-asparaginyl residues. It plays a role in the repair and/or degradation of damaged proteins. The protein is Protein-L-isoaspartate O-methyltransferase of Methanospirillum hungatei JF-1 (strain ATCC 27890 / DSM 864 / NBRC 100397 / JF-1).